Reading from the N-terminus, the 456-residue chain is Bifunctional protein GlmU (456 aa).

The pyrophosphorylase stretch occupies residues 1–229 (MLNNAMSVVI…LSEVEGVNNR (229 aa)). UDP-N-acetyl-alpha-D-glucosamine-binding positions include 11-14 (LAAG), Lys-25, Gln-76, 81-82 (GT), 103-105 (YGD), Gly-140, Glu-154, Asn-169, and Asn-227. Residue Asp-105 participates in Mg(2+) binding. Asn-227 serves as a coordination point for Mg(2+). The tract at residues 230-250 (LQLSRLERVYQSEQAEKLLLA) is linker. Residues 251–456 (GVMLRDPARF…EGWRRPVKKK (206 aa)) form an N-acetyltransferase region. UDP-N-acetyl-alpha-D-glucosamine contacts are provided by Arg-333 and Lys-351. Catalysis depends on His-363, which acts as the Proton acceptor. UDP-N-acetyl-alpha-D-glucosamine is bound by residues Tyr-366 and Asn-377. Residues Ala-380, 386 to 387 (NY), Ser-405, Ala-423, and Arg-440 contribute to the acetyl-CoA site.

This sequence in the N-terminal section; belongs to the N-acetylglucosamine-1-phosphate uridyltransferase family. It in the C-terminal section; belongs to the transferase hexapeptide repeat family. As to quaternary structure, homotrimer. Requires Mg(2+) as cofactor.

It localises to the cytoplasm. It catalyses the reaction alpha-D-glucosamine 1-phosphate + acetyl-CoA = N-acetyl-alpha-D-glucosamine 1-phosphate + CoA + H(+). The enzyme catalyses N-acetyl-alpha-D-glucosamine 1-phosphate + UTP + H(+) = UDP-N-acetyl-alpha-D-glucosamine + diphosphate. The protein operates within nucleotide-sugar biosynthesis; UDP-N-acetyl-alpha-D-glucosamine biosynthesis; N-acetyl-alpha-D-glucosamine 1-phosphate from alpha-D-glucosamine 6-phosphate (route II): step 2/2. It participates in nucleotide-sugar biosynthesis; UDP-N-acetyl-alpha-D-glucosamine biosynthesis; UDP-N-acetyl-alpha-D-glucosamine from N-acetyl-alpha-D-glucosamine 1-phosphate: step 1/1. It functions in the pathway bacterial outer membrane biogenesis; LPS lipid A biosynthesis. Catalyzes the last two sequential reactions in the de novo biosynthetic pathway for UDP-N-acetylglucosamine (UDP-GlcNAc). The C-terminal domain catalyzes the transfer of acetyl group from acetyl coenzyme A to glucosamine-1-phosphate (GlcN-1-P) to produce N-acetylglucosamine-1-phosphate (GlcNAc-1-P), which is converted into UDP-GlcNAc by the transfer of uridine 5-monophosphate (from uridine 5-triphosphate), a reaction catalyzed by the N-terminal domain. In Escherichia coli O157:H7 (strain EC4115 / EHEC), this protein is Bifunctional protein GlmU.